An 84-amino-acid chain; its full sequence is UPF0297 protein NT01CX_2279 (84 aa).

This sequence belongs to the UPF0297 family.

This Clostridium novyi (strain NT) protein is UPF0297 protein NT01CX_2279.